The following is a 159-amino-acid chain: Fimbrial protein MyfA (159 aa).

Positions 1-29 are cleaved as a signal peptide; sequence MNMKKFVKKPLAIAVLMLASGGMVNMVHA.

As to quaternary structure, forms a homomer composed of subunits assembled in a large structure resistant to proteases and chaotropic agents.

It is found in the fimbrium. In terms of biological role, major pilus subunit. Expressed only in pathogenic serotypes, it is part of myf, a probable virulence factor. The chain is Fimbrial protein MyfA (myfA) from Yersinia enterocolitica.